The chain runs to 286 residues: Spermidine/putrescine transport system permease protein PotB homolog (286 aa).

6 helical membrane passes run 10-30 (AVPFFVLMVIFFVVPMAWIIV), 62-82 (LWTATVTVLVALLVAFPFCYF), 94-114 (FVIALATAPIWSSFLIKLIGL), 136-156 (FGSGYTLIGMIYLFTPFMFLP), 193-213 (TAILSGIALTFFPSLTSVAIA), and 248-268 (GAIIIAALITFAFYFVVIFAP). Residues 58–264 (FWTSLWTATV…LITFAFYFVV (207 aa)) form the ABC transmembrane type-1 domain.

Belongs to the binding-protein-dependent transport system permease family. CysTW subfamily.

It is found in the cell membrane. Functionally, required for the activity of the bacterial transport system of putrescine and spermidine. The sequence is that of Spermidine/putrescine transport system permease protein PotB homolog (potB) from Mycoplasma pneumoniae (strain ATCC 29342 / M129 / Subtype 1) (Mycoplasmoides pneumoniae).